Consider the following 122-residue polypeptide: Small ribosomal subunit protein uS12 (122 aa).

D89 is modified (3-methylthioaspartic acid).

This sequence belongs to the universal ribosomal protein uS12 family. Part of the 30S ribosomal subunit. Contacts proteins S8 and S17. May interact with IF1 in the 30S initiation complex.

Its function is as follows. With S4 and S5 plays an important role in translational accuracy. Interacts with and stabilizes bases of the 16S rRNA that are involved in tRNA selection in the A site and with the mRNA backbone. Located at the interface of the 30S and 50S subunits, it traverses the body of the 30S subunit contacting proteins on the other side and probably holding the rRNA structure together. The combined cluster of proteins S8, S12 and S17 appears to hold together the shoulder and platform of the 30S subunit. The chain is Small ribosomal subunit protein uS12 from Neorickettsia sennetsu (strain ATCC VR-367 / Miyayama) (Ehrlichia sennetsu).